The following is a 175-amino-acid chain: Adenine phosphoribosyltransferase (175 aa).

The protein belongs to the purine/pyrimidine phosphoribosyltransferase family. In terms of assembly, homodimer.

It localises to the cytoplasm. It carries out the reaction AMP + diphosphate = 5-phospho-alpha-D-ribose 1-diphosphate + adenine. It functions in the pathway purine metabolism; AMP biosynthesis via salvage pathway; AMP from adenine: step 1/1. Functionally, catalyzes a salvage reaction resulting in the formation of AMP, that is energically less costly than de novo synthesis. The sequence is that of Adenine phosphoribosyltransferase from Francisella tularensis subsp. holarctica (strain FTNF002-00 / FTA).